Reading from the N-terminus, the 334-residue chain is MTMAANDFPFQCQEKKSYSQPSLVYCNGNIAETYLEEKVLTAPLDYLRALPSKDIRSGLTDAINEFLRVPEEKVLVIKRIIDLLHNASLLIDDIQDSSKLRRGVPVAHHIFGIAQTINSANLAYFIAQRELEKLTNPRAFAIYNEELINLHRGQGMELHWRESLHCPTEDEYLRMIQKKTGGLFRLAIRLLQGESASDDDYVSLIDTLGTLFQIRDDYQNLQSDIYSKNKGYCEDLTEGKFSYPVIHSIRSRPGDVRLINILKQRSEDVMVKQYAVQHIESTGSFAFCQNKIQSLVEQAREQLAALENSSSCGGPVRDILDKLAIKPRANIEVE.

Isopentenyl diphosphate contacts are provided by Lys-53, Arg-56, and His-85. Mg(2+) contacts are provided by Asp-92 and Asp-96. Arg-101 is a binding site for dimethylallyl diphosphate. Isopentenyl diphosphate is bound at residue Arg-102. 3 residues coordinate dimethylallyl diphosphate: Lys-179, Thr-180, and Gln-213. Residue Asp-216 participates in Mg(2+) binding. Residues Asn-220, Lys-230, and Lys-240 each contribute to the dimethylallyl diphosphate site.

It belongs to the FPP/GGPP synthase family. Mg(2+) is required as a cofactor.

The catalysed reaction is isopentenyl diphosphate + dimethylallyl diphosphate = (2E)-geranyl diphosphate + diphosphate. It carries out the reaction isopentenyl diphosphate + (2E)-geranyl diphosphate = (2E,6E)-farnesyl diphosphate + diphosphate. The enzyme catalyses isopentenyl diphosphate + (2E,6E)-farnesyl diphosphate = (2E,6E,10E)-geranylgeranyl diphosphate + diphosphate. It participates in secondary metabolite biosynthesis. Functionally, geranylgeranyl pyrophosphate synthase; part of the gene cluster that mediates the biosynthesis of lolitrems, indole-diterpene mycotoxins that are potent tremorgens in mammals, and are synthesized by clavicipitaceous fungal endophytes in association with their grass hosts. The geranylgeranyl diphosphate (GGPP) synthase ltmG is proposed to catalyze the first step in lolitrem biosynthesis. LtmG catalyzes a series of iterative condensations of isopentenyl diphosphate (IPP) with dimethylallyl diphosphate (DMAPP), geranyl diphosphate (GPP), and farnesyl diphosphate (FPP), to form GGPP. GGPP then condenses with indole-3-glycerol phosphate to form 3-geranylgeranylindole, an acyclic intermediate, to be incorporated into paxilline. Either ltmG or ltmC could be responsible for this step, as both are putative prenyl transferases. The FAD-dependent monooxygenase ltmM then catalyzes the epoxidation of the two terminal alkenes of the geranylgeranyl moiety, which is subsequently cyclized by ltmB, to paspaline. The cytochrome P450 monooxygenases ltmQ and ltmP can sequentially oxidize paspaline to terpendole E and terpendole F. Alternatively, ltmP converts paspaline to an intermediate which is oxidized by ltmQ to terpendole F. LtmF, ltmK, ltmE and ltmJ appear to be unique to the epichloe endophytes. The prenyltransferase ltmF is involved in the 27-hydroxyl-O-prenylation. The cytochrome P450 monooxygenase ltmK is required for the oxidative acetal ring formation. The multi-functional prenyltransferase ltmE is required for C20- and C21-prenylations of the indole ring of paspalanes and acts together with the cytochrome P450 monooxygenase ltmJ to yield lolitremanes by multiple oxidations and ring closures. The stereoisomer pairs of lolitriol and lolitrem N or lolitrem B and lolitrem F may be attributed to variations in the way in which ring closure can occur under the action of ltmJ. While the major product of this pathway is lolitrem B, the prenyl transferases and cytochrome P450 monooxygenases identified in this pathway have a remarkable versatility in their regio- and stereo-specificities to generate a diverse range of metabolites that are products of a metabolic grid rather than a linear pathway. In Epichloe festucae (strain Fl1), this protein is Geranylgeranyl pyrophosphate synthase ltmG.